The following is a 1939-amino-acid chain: Myosin-4 (1939 aa).

One can recognise a Myosin N-terminal SH3-like domain in the interval 33–82; that stretch reads DAKSSVFVVDAKESYVKATVQSREGGKVTAKTEGGATVTVKDDQVFSMNP. S36 is subject to Phosphoserine. 2 positions are modified to phosphothreonine: T64 and T69. Phosphoserine is present on S79. One can recognise a Myosin motor domain in the interval 86-782; that stretch reads DKIEDMAMMT…LLGTLEEMRD (697 aa). K130 carries the N6,N6,N6-trimethyllysine modification. 179-186 serves as a coordination point for ATP; that stretch reads GESGAGKT. Y389 carries the post-translational modification Phosphotyrosine. T391 is modified (phosphothreonine). Position 392 is a phosphoserine (S392). Position 419 is a phosphothreonine (T419). Y424 carries the post-translational modification Phosphotyrosine. S625 bears the Phosphoserine mark. The actin-binding stretch occupies residues 659 to 681; that stretch reads LNKLMTNLKSTHPHFVRCLIPNE. H757 carries the post-translational modification Pros-methylhistidine. The segment at 761-775 is actin-binding; it reads KFGHTKVFFKAGLLG. Residue T776 is modified to Phosphothreonine. Residues 785 to 814 enclose the IQ domain; sequence LAQLITRTQAVCRGYLMRVEFKKMMERRES. Residues 843–1939 are a coiled coil; sequence LLKSAETEKE…EVHTKVISEE (1097 aa). S1092 and S1096 each carry phosphoserine. Disordered stretches follow at residues 1128 to 1147 and 1153 to 1172; these read AERA…SREL and RLEE…KKRE. A phosphoserine mark is found at S1162 and S1237. At T1241 the chain carries Phosphothreonine. S1243 carries the phosphoserine modification. Phosphothreonine is present on T1255. S1261 carries the phosphoserine modification. At T1265 the chain carries Phosphothreonine. Positions 1276 to 1299 are disordered; the sequence is ELSTQKARLHTESGEFSRQLDEKD. S1278 bears the Phosphoserine mark. Positions 1284–1299 are enriched in basic and acidic residues; sequence LHTESGEFSRQLDEKD. Phosphothreonine is present on T1286. Residues S1288, S1292, S1303, S1306, and S1413 each carry the phosphoserine modification. Y1464 carries the phosphotyrosine modification. Residue T1467 is modified to Phosphothreonine. S1474 carries the phosphoserine modification. Y1492 carries the post-translational modification Phosphotyrosine. Position 1495 is a phosphoserine (S1495). T1501 carries the post-translational modification Phosphothreonine. Phosphoserine is present on S1514. T1517 carries the post-translational modification Phosphothreonine. 8 positions are modified to phosphoserine: S1542, S1547, S1554, S1574, S1600, S1603, S1714, and S1726. 2 positions are modified to phosphothreonine: T1730 and T1736. S1739 bears the Phosphoserine mark.

Belongs to the TRAFAC class myosin-kinesin ATPase superfamily. Myosin family. As to quaternary structure, muscle myosin is a hexameric protein that consists of 2 heavy chain subunits (MHC), 2 alkali light chain subunits (MLC) and 2 regulatory light chain subunits (MLC-2). Expressed in type 2b myofibers in the tibialis anterior muscle (at protein level).

The protein localises to the cytoplasm. It is found in the myofibril. Functionally, muscle contraction. The chain is Myosin-4 (Myh4) from Mus musculus (Mouse).